We begin with the raw amino-acid sequence, 466 residues long: Ribulose bisphosphate carboxylase large chain (466 aa).

Lysine 5 carries the N6,N6,N6-trimethyllysine modification. 2 residues coordinate substrate: asparagine 114 and threonine 164. Lysine 166 serves as the catalytic Proton acceptor. Lysine 168 provides a ligand contact to substrate. Lysine 192, aspartate 194, and glutamate 195 together coordinate Mg(2+). At lysine 192 the chain carries N6-carboxylysine. Histidine 285 (proton acceptor) is an active-site residue. Arginine 286, histidine 318, and serine 370 together coordinate substrate.

It belongs to the RuBisCO large chain family. Type I subfamily. In terms of assembly, heterohexadecamer of 8 large chains and 8 small chains; disulfide-linked. The disulfide link is formed within the large subunit homodimers. The cofactor is Mg(2+). The disulfide bond which can form in the large chain dimeric partners within the hexadecamer appears to be associated with oxidative stress and protein turnover.

It is found in the plastid. It localises to the chloroplast. It carries out the reaction 2 (2R)-3-phosphoglycerate + 2 H(+) = D-ribulose 1,5-bisphosphate + CO2 + H2O. The catalysed reaction is D-ribulose 1,5-bisphosphate + O2 = 2-phosphoglycolate + (2R)-3-phosphoglycerate + 2 H(+). Functionally, ruBisCO catalyzes two reactions: the carboxylation of D-ribulose 1,5-bisphosphate, the primary event in carbon dioxide fixation, as well as the oxidative fragmentation of the pentose substrate in the photorespiration process. Both reactions occur simultaneously and in competition at the same active site. The protein is Ribulose bisphosphate carboxylase large chain of Asarum canadense (Wild ginger).